The primary structure comprises 565 residues: Mitochondrial distribution and morphology protein 34 (565 aa).

Positions Met-1–Leu-195 constitute an SMP-LTD domain. Disordered stretches follow at residues Glu-207–Leu-236, Pro-296–Thr-317, and Ser-348–Pro-504. Residues Arg-358 to Arg-370 show a composition bias toward basic residues. The span at Val-371–Glu-381 shows a compositional bias: basic and acidic residues. Positions Ser-382–Ser-401 are enriched in polar residues. Basic and acidic residues-rich tracts occupy residues Leu-446–Val-472 and Ile-483–Glu-496.

This sequence belongs to the MDM34 family. As to quaternary structure, component of the ER-mitochondria encounter structure (ERMES) or MDM complex, composed of mmm1, mdm10, mdm12 and mdm34.

The protein localises to the mitochondrion outer membrane. In terms of biological role, component of the ERMES/MDM complex, which serves as a molecular tether to connect the endoplasmic reticulum (ER) and mitochondria. Components of this complex are involved in the control of mitochondrial shape and protein biogenesis, and function in nonvesicular lipid trafficking between the ER and mitochondria. Mdm34 is required for the interaction of the ER-resident membrane protein mmm1 and the outer mitochondrial membrane-resident beta-barrel protein mdm10. The polypeptide is Mitochondrial distribution and morphology protein 34 (Aspergillus terreus (strain NIH 2624 / FGSC A1156)).